Here is a 54-residue protein sequence, read N- to C-terminus: Ovomucoid (54 aa).

The 51-residue stretch at 4–54 (VDCSDYPRPDCTLEYMPLCGSDNKTYGNKCNFCNAVVDSNGTLTLSHFGKC) folds into the Kazal-like domain. Intrachain disulfides connect Cys-6/Cys-36, Cys-14/Cys-33, and Cys-22/Cys-54. Asn-43 carries an N-linked (GlcNAc...) asparagine glycan.

It localises to the secreted. The polypeptide is Ovomucoid (Dendrocygna eytoni (Plumed whistling-duck)).